A 216-amino-acid chain; its full sequence is MKRPAYMSEVPVNHTSGQEARCVYLTFDDGPNPFCTPQILDVLAEHRVPATFFAIGSYVKDHPELIRRLVAEGHDVANHTMTHPDLATCDPKDVKREIDEAHQAIVSACPQALVRHLRAPYGVWTEDVLSASVRAGLGAVHWSADPRDWSCPGVDVIVDEVLAAARPGAIVLLHDGCPPDEVEQCSLAGLRDQTLIALSRIIPALHSRGFEIRSLP.

Residues Arg21 to Arg213 form the NodB homology domain. Asp28 functions as the Proton acceptor in the catalytic mechanism. Residues His79 and His83 each contribute to the a divalent metal cation site. His174 serves as the catalytic Proton donor.

This sequence belongs to the polysaccharide deacetylase family.

The protein localises to the cytoplasm. Functionally, is involved in generating a small heat-stable compound (Nod), an acylated oligomer of N-acetylglucosamine, that stimulates mitosis in various plant protoplasts. This chain is Chitooligosaccharide deacetylase (nodB), found in Rhizobium leguminosarum bv. viciae.